The primary structure comprises 166 residues: Small ribosomal subunit protein uS5 (166 aa).

One can recognise an S5 DRBM domain in the interval 11–74; it reads LQEKLIAVNR…EQAKRNLNKV (64 aa).

Belongs to the universal ribosomal protein uS5 family. Part of the 30S ribosomal subunit. Contacts proteins S4 and S8.

Functionally, with S4 and S12 plays an important role in translational accuracy. In terms of biological role, located at the back of the 30S subunit body where it stabilizes the conformation of the head with respect to the body. This is Small ribosomal subunit protein uS5 from Aeromonas hydrophila subsp. hydrophila (strain ATCC 7966 / DSM 30187 / BCRC 13018 / CCUG 14551 / JCM 1027 / KCTC 2358 / NCIMB 9240 / NCTC 8049).